The chain runs to 368 residues: Membrane glycoprotein UL18 (368 aa).

The N-terminal stretch at 1-19 (MMTMWCLTLFVLWMLRVVG) is a signal peptide. A helical transmembrane segment spans residues 326-346 (ISSVLLALLLCALLFAFLHYF).

As to quaternary structure, interacts with host LILRB1.

The protein localises to the host membrane. Functionally, plays a role in the protection against host NK cell cytotoxicity by interacting with and modulating the activity of the host inhibitory leukocyte Ig-like receptor 1/LILRB1, which is expressed on monocytes, dendritic cells, as well as subsets of T and NK cells. UL18 exerts an inhibitory effect on LIR-1+ NK cells, while it stimulates LIR-1- NK cell. The chain is Membrane glycoprotein UL18 (UL18) from Homo sapiens (Human).